The sequence spans 132 residues: uncharacterized protein (132 aa).

WD repeat units follow at residues 14–53 and 58–97; these read DLQD…LEIL and AHDD…LANV.

This is an uncharacterized protein from Acanthamoeba polyphaga (Amoeba).